The following is a 298-amino-acid chain: GTP cyclohydrolase FolE2 (298 aa).

The protein belongs to the GTP cyclohydrolase IV family.

It catalyses the reaction GTP + H2O = 7,8-dihydroneopterin 3'-triphosphate + formate + H(+). Its pathway is cofactor biosynthesis; 7,8-dihydroneopterin triphosphate biosynthesis; 7,8-dihydroneopterin triphosphate from GTP: step 1/1. Converts GTP to 7,8-dihydroneopterin triphosphate. The sequence is that of GTP cyclohydrolase FolE2 from Pseudomonas paraeruginosa (strain DSM 24068 / PA7) (Pseudomonas aeruginosa (strain PA7)).